Here is a 193-residue protein sequence, read N- to C-terminus: UPF0301 protein SAV_5129 (193 aa).

It belongs to the UPF0301 (AlgH) family.

In Streptomyces avermitilis (strain ATCC 31267 / DSM 46492 / JCM 5070 / NBRC 14893 / NCIMB 12804 / NRRL 8165 / MA-4680), this protein is UPF0301 protein SAV_5129.